A 151-amino-acid chain; its full sequence is Transcriptional repressor NrdR (151 aa).

A zinc finger lies at 3–34 (CPKCGSLNDKVLETRQSKEGVVIKRRRECLNC). Positions 49–139 (IEVIKKNNTV…VFDGFEDIKD (91 aa)) constitute an ATP-cone domain.

It belongs to the NrdR family. Zn(2+) serves as cofactor.

Functionally, negatively regulates transcription of bacterial ribonucleotide reductase nrd genes and operons by binding to NrdR-boxes. This chain is Transcriptional repressor NrdR, found in Sulfurihydrogenibium sp. (strain YO3AOP1).